The primary structure comprises 121 residues: Phosphoribosyl-ATP pyrophosphatase (121 aa).

It belongs to the PRA-PH family.

It is found in the cytoplasm. The catalysed reaction is 1-(5-phospho-beta-D-ribosyl)-ATP + H2O = 1-(5-phospho-beta-D-ribosyl)-5'-AMP + diphosphate + H(+). It functions in the pathway amino-acid biosynthesis; L-histidine biosynthesis; L-histidine from 5-phospho-alpha-D-ribose 1-diphosphate: step 2/9. The sequence is that of Phosphoribosyl-ATP pyrophosphatase from Burkholderia multivorans (strain ATCC 17616 / 249).